The sequence spans 469 residues: GTPase Der (469 aa).

EngA-type G domains lie at proline 3–glutamate 167 and proline 176–phenylalanine 349. Residues glycine 9–serine 16, aspartate 56–leucine 60, asparagine 119–glutamate 122, glycine 182–serine 189, aspartate 229–valine 233, and asparagine 294–aspartate 297 contribute to the GTP site. The 87-residue stretch at isoleucine 350–lysine 436 folds into the KH-like domain. Residues glutamate 432–lysine 443 show a composition bias toward basic and acidic residues. Residues glutamate 432–aspartate 469 are disordered. Residues methionine 455–aspartate 469 show a composition bias toward basic residues.

This sequence belongs to the TRAFAC class TrmE-Era-EngA-EngB-Septin-like GTPase superfamily. EngA (Der) GTPase family. As to quaternary structure, associates with the 50S ribosomal subunit.

Its function is as follows. GTPase that plays an essential role in the late steps of ribosome biogenesis. In Thiobacillus denitrificans (strain ATCC 25259 / T1), this protein is GTPase Der.